A 169-amino-acid chain; its full sequence is Succinate dehydrogenase cytochrome b560 subunit, mitochondrial (169 aa).

A mitochondrion-targeting transit peptide spans 1–29 (MAAFLLRHVSRHCLRAHLNAQLCIRNAAP). The Mitochondrial matrix portion of the chain corresponds to 30-62 (LGTTAKEEMERFWKKNTSSNRPLSPHLTIYKWS). A helical transmembrane segment spans residues 63 to 92 (LPMALSVCHRGSGIALSGGVSLFGLSALLL). The Mitochondrial intermembrane portion of the chain corresponds to 93–112 (PGNFESYLMFVKSLCLGPTL). The helical transmembrane segment at 113 to 137 (IYSAKFVLVFPLMYHSLNGIRHLLW) threads the bilayer. A heme b-binding site is contributed by His-127. The Mitochondrial matrix portion of the chain corresponds to 138-144 (DLGKGLA). A helical transmembrane segment spans residues 145–166 (IPQVWLSGVAVVVLAVLSSGGL). The Mitochondrial intermembrane segment spans residues 167-169 (AAL).

It belongs to the cytochrome b560 family. As to quaternary structure, component of complex II composed of four subunits: the flavoprotein (FP) SDHA, iron-sulfur protein (IP) SDHB, and a cytochrome b560 composed of SDHC and SDHD. Heme b is required as a cofactor.

Its subcellular location is the mitochondrion inner membrane. It participates in carbohydrate metabolism; tricarboxylic acid cycle. Functionally, membrane-anchoring subunit of succinate dehydrogenase (SDH) that is involved in complex II of the mitochondrial electron transport chain and is responsible for transferring electrons from succinate to ubiquinone (coenzyme Q). SDH also oxidizes malate to the non-canonical enol form of oxaloacetate, enol-oxaloacetate. Enol-oxaloacetate, which is a potent inhibitor of the succinate dehydrogenase activity, is further isomerized into keto-oxaloacetate. In Mus musculus (Mouse), this protein is Succinate dehydrogenase cytochrome b560 subunit, mitochondrial (Sdhc).